The following is a 524-amino-acid chain: G1/S-specific cyclin-E (524 aa).

A disordered region spans residues 1–155 (MAGRKSSRTA…EESHEMVRLE (155 aa)). Basic and acidic residues predominate over residues 18–47 (KPERKSAILSPHDELRERLLETAIDMKENI). A compositionally biased stretch (polar residues) spans 48–62 (PQRNTRNSSVGSQKS). Composition is skewed to basic and acidic residues over residues 63-78 (DCSE…EGPA), 86-95 (KHRNGSREDS), and 146-155 (EESHEMVRLE).

It belongs to the cyclin family. Cyclin E subfamily. In terms of assembly, interacts with a member of the CDK2/CDK protein kinases to form a serine/threonine kinase holoenzyme complex. The cyclin subunit imparts substrate specificity to the complex. Expressed dynamically in proliferating cells throughout development. Detectable in larval blast cells undergoing active proliferation that give rise to all tissue types, including germline, intestine, hypodermis, neurons, and muscle.

The protein localises to the nucleus. It localises to the cytoplasm. The protein resides in the cytoskeleton. It is found in the microtubule organizing center. Its subcellular location is the centrosome. The protein localises to the centriole. In terms of biological role, essential for the control of the cell cycle at the G1/S (start) transition. In association with cdk-2, regulates proliferation, quiescent state and cell fate during the development of several cell lineages. In the embryo, initiates the establishment of cell polarity through the recruitment of the centrosomal proteins spd-2 and spd-5 during prophase. During the development of the vulva, controls the onset of vulval cell terminal differentiation by controlling the duration of G1 phase. During hypoderm development at early larval stages, controls syncytial fate of seam cell daughter cells. Involved in the progression of cell division in the intestinal lineage in larvae, and in particular in endoreplication, a specific growth pathway in the intestinal epithelium, required for feeding and gut development in growing larvae. By controlling the activity of translational repressor gld-1, regulates the pool of germline stem cells and the size of the mitotic zone by preventing entry into meiosis. In addition, repression of expression by gld-1 prevents mitosis re-entry in meiotic germline cells. This is G1/S-specific cyclin-E from Caenorhabditis elegans.